Here is a 153-residue protein sequence, read N- to C-terminus: Interleukin-4 (153 aa).

The N-terminal stretch at 1 to 24 (MGLTSQLLPPLFFLLACAGNFVHG) is a signal peptide. Intrachain disulfides connect cysteine 27-cysteine 151, cysteine 48-cysteine 89, and cysteine 70-cysteine 123. Asparagine 62 carries N-linked (GlcNAc...) asparagine glycosylation.

This sequence belongs to the IL-4/IL-13 family.

The protein localises to the secreted. Participates in at least several B-cell activation processes as well as of other cell types. It is a costimulator of DNA-synthesis. It induces the expression of class II MHC molecules on resting B-cells. It enhances both secretion and cell surface expression of IgE and IgG1. It also regulates the expression of the low affinity Fc receptor for IgE (CD23) on both lymphocytes and monocytes. Positively regulates IL31RA expression in macrophages. Stimulates autophagy in dendritic cells by interfering with mTORC1 signaling and through the induction of RUFY4. The protein is Interleukin-4 (IL4) of Macaca fascicularis (Crab-eating macaque).